A 315-amino-acid chain; its full sequence is Zinc finger transcription factor ref-2 (315 aa).

The C2H2-type 1; atypical zinc-finger motif lies at 83–112 (VQCLWETNGQVCMHVCQNSGELSTHISSNH). The C2H2-type 2; degenerate zinc finger occupies 124 to 146 (KGCDREFKMFKAKYKLVNHMRVH). C2H2-type zinc fingers lie at residues 152-174 (FLCD…KRIH), 180-204 (FQCT…MHVH), and 210-234 (YSCM…TKVH). The interval 225 to 270 (SSLRKHTKVHENEKKSQLSPEHDESSDSGNASIGTPTTDESLTFSP) is disordered. A compositionally biased stretch (basic and acidic residues) spans 233–249 (VHENEKKSQLSPEHDES). Positions 251-270 (DSGNASIGTPTTDESLTFSP) are enriched in polar residues.

As to quaternary structure, interacts with TCF transcription factor pop-1; the interaction is direct and facilitates transcriptional activation; transcription may be repressed by beta-catenin/sys-1.

It is found in the nucleus. It localises to the cytoplasm. Its function is as follows. Transcription factor. Modulates expression of target genes by binding to regulatory elements. Required for normal cell division timing and cell positioning in anterior lineages, acting in a cell-autonomous manner. Required for development, fusion and fate of cells of the ventral epidermis, the Pn.p cells, during larval development; acts in concert with homeobox genes lin-39 and mab-5. Required for the specification of the AIY interneuron. In complex with TCF transcription factor pop-1, positively modulates expression of LIM/homeobox protein ttx-3 in anterior daughter cells of the SMDD/AIY neuron lineage. The chain is Zinc finger transcription factor ref-2 from Caenorhabditis elegans.